The chain runs to 263 residues: tRNA pseudouridine synthase A (263 aa).

Catalysis depends on Asp73, which acts as the Nucleophile. Tyr131 serves as a coordination point for substrate.

The protein belongs to the tRNA pseudouridine synthase TruA family. Homodimer.

It carries out the reaction uridine(38/39/40) in tRNA = pseudouridine(38/39/40) in tRNA. Formation of pseudouridine at positions 38, 39 and 40 in the anticodon stem and loop of transfer RNAs. This Mycoplasmoides gallisepticum (strain R(low / passage 15 / clone 2)) (Mycoplasma gallisepticum) protein is tRNA pseudouridine synthase A.